We begin with the raw amino-acid sequence, 438 residues long: V-type ATP synthase beta chain (438 aa).

This sequence belongs to the ATPase alpha/beta chains family.

Produces ATP from ADP in the presence of a proton gradient across the membrane. The V-type beta chain is a regulatory subunit. This chain is V-type ATP synthase beta chain (atpB), found in Chlamydia pneumoniae (Chlamydophila pneumoniae).